A 721-amino-acid polypeptide reads, in one-letter code: Ribosomal RNA large subunit methyltransferase K/L (721 aa).

The region spanning 56 to 167 (GMYKACLWSR…REVVTVSIDL (112 aa)) is the THUMP domain.

Belongs to the methyltransferase superfamily. RlmKL family.

It localises to the cytoplasm. It carries out the reaction guanosine(2445) in 23S rRNA + S-adenosyl-L-methionine = N(2)-methylguanosine(2445) in 23S rRNA + S-adenosyl-L-homocysteine + H(+). The catalysed reaction is guanosine(2069) in 23S rRNA + S-adenosyl-L-methionine = N(2)-methylguanosine(2069) in 23S rRNA + S-adenosyl-L-homocysteine + H(+). Functionally, specifically methylates the guanine in position 2445 (m2G2445) and the guanine in position 2069 (m7G2069) of 23S rRNA. This Marinomonas sp. (strain MWYL1) protein is Ribosomal RNA large subunit methyltransferase K/L.